We begin with the raw amino-acid sequence, 490 residues long: Betaine aldehyde dehydrogenase (490 aa).

K(+)-binding residues include S26, I27, and D93. 150–152 (GAW) contacts NAD(+). The active-site Charge relay system is the K162. 176 to 179 (KPSE) is a binding site for NAD(+). Residue V180 coordinates K(+). An NAD(+)-binding site is contributed by 230 to 233 (GVAT). K(+) is bound at residue L246. E252 serves as the catalytic Proton acceptor. NAD(+) contacts are provided by G254, C286, and E387. C286 (nucleophile) is an active-site residue. Residue C286 is modified to Cysteine sulfenic acid (-SOH). K(+) is bound by residues K457 and G460. E464 functions as the Charge relay system in the catalytic mechanism.

It belongs to the aldehyde dehydrogenase family. In terms of assembly, dimer of dimers. It depends on K(+) as a cofactor.

The catalysed reaction is betaine aldehyde + NAD(+) + H2O = glycine betaine + NADH + 2 H(+). Its pathway is amine and polyamine biosynthesis; betaine biosynthesis via choline pathway; betaine from betaine aldehyde: step 1/1. In terms of biological role, involved in the biosynthesis of the osmoprotectant glycine betaine. Catalyzes the irreversible oxidation of betaine aldehyde to the corresponding acid. In Stutzerimonas stutzeri (strain A1501) (Pseudomonas stutzeri), this protein is Betaine aldehyde dehydrogenase.